Reading from the N-terminus, the 40-residue chain is Potassium channel toxin alpha-KTx 12.3 (40 aa).

4 disulfide bridges follow: Cys-2–Cys-5, Cys-10–Cys-31, Cys-16–Cys-36, and Cys-20–Cys-38.

As to expression, expressed by the venom gland.

It is found in the secreted. Its function is as follows. Inhibits high conductance calcium-activated potassium channels (KCNMA). Inhibits Shaker B potassium channels. The chain is Potassium channel toxin alpha-KTx 12.3 from Tityus costatus (Brazilian scorpion).